The primary structure comprises 441 residues: Zinc finger protein ZIC 3 (441 aa).

The segment at 222–257 (LSCKWLEESTMNHPQKTCDRTFSSMHELVTHMTMEH) adopts a C2H2-type 1; atypical zinc-finger fold. The segment at 266–293 (HICYWEECPRGGKSFKAKYKLVNHIRVH) adopts a C2H2-type 2; atypical zinc-finger fold. 3 C2H2-type zinc fingers span residues 299 to 323 (FPCP…KRTH), 329 to 353 (FKCE…MHVH), and 359 to 381 (YICK…MKVH). Positions 375–441 (RKHMKVHESQ…LPPNFNEWYV (67 aa)) are disordered. Residues 383-399 (SQGSDSSPAASSGYESA) are compositionally biased toward low complexity. Over residues 406 to 429 (SANSEEPSKNSSATHQTNNNSHNT) the composition is skewed to polar residues.

Belongs to the GLI C2H2-type zinc-finger protein family. First detected at early gastrula (stage 10.25) in the dorsal lip and prospective neural plate. Also expressed in the mesoderm at early gastrulation, with expression strongest on the dorsal side. Mesodermal expression continues at stage 12 but is hardly detectable after stage 14. As gastrulation proceeds, expression decreases in the dorsal lip and increases in the prospective neural plate. At the neural plate stage (stage 14), expressed strongly in the prospective mesencephalon and anterior rhombencephalon, after which expression becomes stronger in the anterior neural folds. At early tailbud stage (stage 20), expression becomes restricted to the dorsal region of forebrain, midbrain and hindbrain, and weakly to the dorsal trunk. After mid-tailbud stage, expression decreases in the diencephalon, appears in the lateral mesoderm of the tailbud region and becomes restricted in the dorsal part of the neural tube.

Its subcellular location is the nucleus. It is found in the cytoplasm. Functionally, probably acts as a transcriptional activator. May bind to the minimal GLI-consensus sequence 5'-GGGTGGTC-3'. Can determine the ectodermal cell fate and promote the earliest step of neural and neural crest development. Involved in establishing left-right asymmetry in the embryo. This Xenopus laevis (African clawed frog) protein is Zinc finger protein ZIC 3 (zic3).